An 800-amino-acid polypeptide reads, in one-letter code: Phosphoinositide 3-kinase adapter protein 1 (800 aa).

One can recognise a TIR domain in the interval 8–145 (GGYDVLILYA…AVKKAISEDS (138 aa)). Positions 10 to 144 (YDVLILYASD…EAVKKAISED (135 aa)) are necessary and sufficient to mediate inhibition of NF-kappa-B downstream of activated TLRs. Positions 185–321 (VQPDHIRCGV…NIPASGLHLF (137 aa)) constitute a DBB domain. Tyr-266 bears the Phosphotyrosine mark. 3 positions are modified to phosphotyrosine; by SYK: Tyr-423, Tyr-448, and Tyr-463. The tract at residues 527 to 548 (EMASRPPVPVPRPESSSPQPDN) is disordered. Residues 643 to 663 (QQENLKRLRDSITRRQMEKQK) adopt a coiled-coil conformation. A compositionally biased stretch (basic and acidic residues) spans 702–713 (PKKELKRGDWKT). A disordered region spans residues 702-800 (PKKELKRGDW…YPPPVPPRGR (99 aa)). The span at 714–737 (ESTSSTTSSASNRSSTRSILSVSS) shows a compositional bias: low complexity. Over residues 749 to 759 (SEASRSRSPIP) the composition is skewed to polar residues. Composition is skewed to pro residues over residues 767 to 777 (LPLPERPPRVP) and 791 to 800 (YPPPVPPRGR).

As to quaternary structure, homooligomer. Interacts (phosphorylated on tyrosine residues within YXXM motifs) with PIK3R1 (via SH2 domain); required for BCR- and TLR-mediated activation of phosphoinositide 3-kinase. Post-translationally, constitutively phosphorylated. Phosphorylated on tyrosine residues within the YXXM motifs by BTK and SYK. Isoform 1 and isoform 2 are phosphorylated on tyrosine residues, most likely within the YXXM motifs, via CD19 activation.

The protein resides in the cytoplasm. It localises to the cell membrane. Signaling adapter that contributes to B-cell development by linking B-cell receptor (BCR) signaling to the phosphoinositide 3-kinase (PI3K)-Akt signaling pathway. Has a complementary role to the BCR coreceptor CD19, coupling BCR and PI3K activation by providing a docking site for the PI3K subunit PIK3R1. Alternatively, links Toll-like receptor (TLR) signaling to PI3K activation, a process preventing excessive inflammatory cytokine production. Also involved in the activation of PI3K in natural killer cells. May be involved in the survival of mature B-cells via activation of REL. This chain is Phosphoinositide 3-kinase adapter protein 1 (PIK3AP1), found in Gallus gallus (Chicken).